The primary structure comprises 290 residues: uncharacterized protein (290 aa).

5 helical membrane passes run 10 to 27 (FFVARLLVVLYLSTLLLI), 32 to 54 (VNYIAVGILSVYFLINVYVYFFS), 69 to 91 (ILVPAFVFFSKILYSIYALGVLI), 100 to 117 (VLAGIILLETYGLAFFYF), and 121 to 143 (YLLMISHFILFLALFFTSYNFEY). Positions 147-183 (VGKERKRILKLKKNYHKLLKEFSNFEREKRMFSNLRK) form a coiled coil.

It localises to the cell membrane. This is an uncharacterized protein from Aquifex aeolicus (strain VF5).